A 198-amino-acid polypeptide reads, in one-letter code: ATP synthase subunit b (198 aa).

The chain crosses the membrane as a helical span at residues 49–67 (IWKWANFLILAGGLGYLVG).

Belongs to the ATPase B chain family. As to quaternary structure, F-type ATPases have 2 components, F(1) - the catalytic core - and F(0) - the membrane proton channel. F(1) has five subunits: alpha(3), beta(3), gamma(1), delta(1), epsilon(1). F(0) has three main subunits: a(1), b(2) and c(10-14). The alpha and beta chains form an alternating ring which encloses part of the gamma chain. F(1) is attached to F(0) by a central stalk formed by the gamma and epsilon chains, while a peripheral stalk is formed by the delta and b chains.

The protein localises to the cell inner membrane. In terms of biological role, f(1)F(0) ATP synthase produces ATP from ADP in the presence of a proton or sodium gradient. F-type ATPases consist of two structural domains, F(1) containing the extramembraneous catalytic core and F(0) containing the membrane proton channel, linked together by a central stalk and a peripheral stalk. During catalysis, ATP synthesis in the catalytic domain of F(1) is coupled via a rotary mechanism of the central stalk subunits to proton translocation. Component of the F(0) channel, it forms part of the peripheral stalk, linking F(1) to F(0). In Solibacter usitatus (strain Ellin6076), this protein is ATP synthase subunit b.